The primary structure comprises 234 residues: MVYASLGKAIEENCPEEYVEQAIQNDPNSLNAVDDDKRTPLHWACSVGKVNTIYFLLKQPNIKPDEKDEAGWTPLMISINNRSVPDNVIEELINRSDVDPTITTRGGQTCLHYAAGKGRLSIVQLLCDKAPELIRKKDLQGQTPLHRAAAVGKIQVVKYLISQRAPLNTSDSYGFTPLHFALAEGHPDVGVELVRAGADTLRKDSENHTALEVCPDRIVCNEFLEACKEQNLEI.

ANK repeat units lie at residues 36-66 (DKRT…KPDE), 70-100 (AGWT…DVDP), 106-135 (GGQT…ELIR), 140-169 (QGQT…PLNT), and 173-203 (YGFT…TLRK).

In Schizosaccharomyces pombe (strain 972 / ATCC 24843) (Fission yeast), this protein is Ankyrin repeat-containing protein C6C3.08.